The sequence spans 369 residues: Aminomethyltransferase (369 aa).

It belongs to the GcvT family. As to quaternary structure, the glycine cleavage system is composed of four proteins: P, T, L and H.

The enzyme catalyses N(6)-[(R)-S(8)-aminomethyldihydrolipoyl]-L-lysyl-[protein] + (6S)-5,6,7,8-tetrahydrofolate = N(6)-[(R)-dihydrolipoyl]-L-lysyl-[protein] + (6R)-5,10-methylene-5,6,7,8-tetrahydrofolate + NH4(+). Its function is as follows. The glycine cleavage system catalyzes the degradation of glycine. The protein is Aminomethyltransferase of Synechococcus sp. (strain CC9311).